The chain runs to 836 residues: Probable serine/threonine-protein kinase dyrk1 (836 aa).

Residues 99 to 278 (QQQYQQQHNN…SSNNNNNNKQ (180 aa)) are compositionally biased toward low complexity. The interval 99-286 (QQQYQQQHNN…KQSKYNDGYD (188 aa)) is disordered. The Protein kinase domain occupies 304 to 624 (FEIISSLGKG…PLEALQHSFF (321 aa)). Residues 310–318 (LGKGSFGQV) and Lys333 each bind ATP. The Proton acceptor role is filled by Asp432. 3 disordered regions span residues 627–697 (DETS…QQQQ), 718–767 (TYSP…INSN), and 785–836 (NIYN…NNNI). A compositionally biased stretch (low complexity) spans 630–697 (SQPPQQQSQQ…QQLQQQQQQQ (68 aa)). Positions 718-728 (TYSPTTQQSNH) are enriched in polar residues. Residues 729-744 (KLVDQMKKASMKDKSP) are compositionally biased toward basic and acidic residues. Low complexity predominate over residues 785 to 816 (NIYNNNNNNNNNNNNNNNNNNSNNYNNSNELS).

This sequence belongs to the protein kinase superfamily. CMGC Ser/Thr protein kinase family. MNB/DYRK subfamily.

The catalysed reaction is L-seryl-[protein] + ATP = O-phospho-L-seryl-[protein] + ADP + H(+). It catalyses the reaction L-threonyl-[protein] + ATP = O-phospho-L-threonyl-[protein] + ADP + H(+). The enzyme catalyses L-tyrosyl-[protein] + ATP = O-phospho-L-tyrosyl-[protein] + ADP + H(+). The polypeptide is Probable serine/threonine-protein kinase dyrk1 (dyrk1) (Dictyostelium discoideum (Social amoeba)).